A 799-amino-acid polypeptide reads, in one-letter code: Homeobox protein engrailed (799 aa).

4 disordered regions span residues 189-331, 369-444, 554-664, and 678-705; these read LPSR…DATK, GNFL…SLRQ, HPFL…DKAK, and SDRP…RTAF. The span at 210 to 222 shows a compositional bias: polar residues; sequence QSPSTSIRSNLVS. Basic and acidic residues-rich tracts occupy residues 228–239 and 246–256; these read SRRDDQETSDSC and RAINDSERYDV. 2 stretches are compositionally biased toward polar residues: residues 284-299 and 377-401; these read LNLT…QLFH and HTFQ…SSPD. A compositionally biased stretch (low complexity) spans 416 to 431; the sequence is ESLSSPSSSSSSSRSS. 2 stretches are compositionally biased toward basic and acidic residues: residues 608-619 and 629-648; these read DQKKRSRDESAS and VHLK…EKGN. A DNA-binding region (homeobox) is located at residues 698 to 757; that stretch reads EKRPRTAFTNDQLQRLKREFDECRYLTETRRKNLADELGLTESQIKIWFQNKRAKIKKSV.

This sequence belongs to the engrailed homeobox family. Expressed in the dorsal ectoderm of early gastrulae in a band corresponding to the peripheral area of the presumptive shell gland. Also expressed at four points along the posterior ectoderm. In late gastrulae, it is predominantly expressed in the peripheral ectoderm of the shell gland and in spots at the posterior end behind the presumptive foot. Expressed in late trochophore larvae at four points behind the foot, at two locations at the base of the foot and in the peripheral ectoderm of the shell gland.

The protein resides in the nucleus. Functionally, may be involved in shell and shell gland formation during development. This Lymnaea stagnalis (Great pond snail) protein is Homeobox protein engrailed.